Reading from the N-terminus, the 599-residue chain is Putative sensor histidine kinase NtrY-like (599 aa).

4 consecutive transmembrane segments (helical) span residues 17 to 37, 44 to 64, 85 to 105, and 285 to 305; these read ILIL…FYVI, FSTI…LGIL, IVIA…VFSV, and IMFI…GVLF. An HAMP domain is found at 307 to 361; sequence AKIVKPIKKLVTATDKVKDGDLTVQVPENEVDKDEIGTLYAAFNRMIKQLSRQQR. The region spanning 378–589 is the Histidine kinase domain; that stretch reads KVAHEIKNPL…IIDIKFDLKE (212 aa). Residue His-381 is modified to Phosphohistidine; by autocatalysis.

The protein resides in the cell membrane. The enzyme catalyses ATP + protein L-histidine = ADP + protein N-phospho-L-histidine.. Member of the two-component regulatory system RP614/RP562. The chain is Putative sensor histidine kinase NtrY-like from Rickettsia prowazekii (strain Madrid E).